We begin with the raw amino-acid sequence, 178 residues long: Crossover junction endodeoxyribonuclease RuvC (178 aa).

Residues Asp-11, Glu-71, and Asp-143 contribute to the active site. Residues Asp-11, Glu-71, and Asp-143 each coordinate Mg(2+).

It belongs to the RuvC family. In terms of assembly, homodimer which binds Holliday junction (HJ) DNA. The HJ becomes 2-fold symmetrical on binding to RuvC with unstacked arms; it has a different conformation from HJ DNA in complex with RuvA. In the full resolvosome a probable DNA-RuvA(4)-RuvB(12)-RuvC(2) complex forms which resolves the HJ. The cofactor is Mg(2+).

It is found in the cytoplasm. It catalyses the reaction Endonucleolytic cleavage at a junction such as a reciprocal single-stranded crossover between two homologous DNA duplexes (Holliday junction).. Functionally, the RuvA-RuvB-RuvC complex processes Holliday junction (HJ) DNA during genetic recombination and DNA repair. Endonuclease that resolves HJ intermediates. Cleaves cruciform DNA by making single-stranded nicks across the HJ at symmetrical positions within the homologous arms, yielding a 5'-phosphate and a 3'-hydroxyl group; requires a central core of homology in the junction. The consensus cleavage sequence is 5'-(A/T)TT(C/G)-3'. Cleavage occurs on the 3'-side of the TT dinucleotide at the point of strand exchange. HJ branch migration catalyzed by RuvA-RuvB allows RuvC to scan DNA until it finds its consensus sequence, where it cleaves and resolves the cruciform DNA. The chain is Crossover junction endodeoxyribonuclease RuvC from Neisseria meningitidis serogroup C / serotype 2a (strain ATCC 700532 / DSM 15464 / FAM18).